A 429-amino-acid chain; its full sequence is Enolase (429 aa).

A (2R)-2-phosphoglycerate-binding site is contributed by glutamine 168. Glutamate 210 (proton donor) is an active-site residue. Mg(2+) contacts are provided by aspartate 247, glutamate 288, and aspartate 315. The (2R)-2-phosphoglycerate site is built by lysine 340, arginine 369, serine 370, and lysine 391. The active-site Proton acceptor is lysine 340.

It belongs to the enolase family. Requires Mg(2+) as cofactor.

Its subcellular location is the cytoplasm. The protein resides in the secreted. The protein localises to the cell surface. The enzyme catalyses (2R)-2-phosphoglycerate = phosphoenolpyruvate + H2O. The protein operates within carbohydrate degradation; glycolysis; pyruvate from D-glyceraldehyde 3-phosphate: step 4/5. Functionally, catalyzes the reversible conversion of 2-phosphoglycerate (2-PG) into phosphoenolpyruvate (PEP). It is essential for the degradation of carbohydrates via glycolysis. The sequence is that of Enolase from Trichormus variabilis (strain ATCC 29413 / PCC 7937) (Anabaena variabilis).